A 295-amino-acid polypeptide reads, in one-letter code: Proline iminopeptidase (295 aa).

The AB hydrolase-1 domain occupies 29-279 (PLLLLHGGPG…GCGHMPFVQE (251 aa)). The active-site Nucleophile is Ser107. Asp246 is an active-site residue. His273 (proton donor) is an active-site residue.

This sequence belongs to the peptidase S33 family.

Its subcellular location is the cell envelope. It catalyses the reaction Release of N-terminal proline from a peptide.. Functionally, releases the N-terminal proline from various substrates. The sequence is that of Proline iminopeptidase from Lactobacillus delbrueckii subsp. bulgaricus (strain ATCC 11842 / DSM 20081 / BCRC 10696 / JCM 1002 / NBRC 13953 / NCIMB 11778 / NCTC 12712 / WDCM 00102 / Lb 14).